The chain runs to 67 residues: Preprofallaxidin-4 (67 aa).

An N-terminal signal peptide occupies residues 1–22 (MASLKKFLFLVLFLGMVSLSIC). Residues 23–46 (DKEKREGENEEEEEEHEEESEEKR) constitute a propeptide that is removed on maturation. A disordered region spans residues 24–48 (KEKREGENEEEEEEHEEESEEKRGL). Residues 30–42 (ENEEEEEEHEEES) show a composition bias toward acidic residues.

This sequence belongs to the frog skin active peptide (FSAP) family. Dermaseptin subfamily. As to expression, expressed by the skin glands.

The protein resides in the secreted. The protein is Preprofallaxidin-4 of Litoria fallax (Eastern dwarf tree frog).